The chain runs to 258 residues: MLSRRIIPCLDVRDGRVVKGVKFRDHIDMGDIVELALRYRAQGADELVFYDIGASPEGRSVDYTWVERVARLIDIPFCVAGGIGDVETARAVLHAGADKISINSPALGRPQLISELADAFGVQCVVVGIDSIREEDGQWRVRRYTGDPSKTQALPMRTLDWVAEAQRLGAGEMVLNCMDNDGVRRGYDIAQLRQVRALCRVPLIASGGAGDMQHFADVFDQADVDGALAASVFHSGAIPIPELKQFLRAQQIEVRDGQ.

Catalysis depends on residues Asp11 and Asp130.

The protein belongs to the HisA/HisF family. Heterodimer of HisH and HisF.

It is found in the cytoplasm. It carries out the reaction 5-[(5-phospho-1-deoxy-D-ribulos-1-ylimino)methylamino]-1-(5-phospho-beta-D-ribosyl)imidazole-4-carboxamide + L-glutamine = D-erythro-1-(imidazol-4-yl)glycerol 3-phosphate + 5-amino-1-(5-phospho-beta-D-ribosyl)imidazole-4-carboxamide + L-glutamate + H(+). The protein operates within amino-acid biosynthesis; L-histidine biosynthesis; L-histidine from 5-phospho-alpha-D-ribose 1-diphosphate: step 5/9. Functionally, IGPS catalyzes the conversion of PRFAR and glutamine to IGP, AICAR and glutamate. The HisF subunit catalyzes the cyclization activity that produces IGP and AICAR from PRFAR using the ammonia provided by the HisH subunit. In Xanthomonas axonopodis pv. citri (strain 306), this protein is Imidazole glycerol phosphate synthase subunit HisF.